The sequence spans 821 residues: Probable phosphoenolpyruvate synthase (821 aa).

His444 (tele-phosphohistidine intermediate) is an active-site residue. Substrate is bound by residues Arg543, Arg590, Glu687, Gly709, Thr710, Asn711, and Asp712. Glu687 serves as a coordination point for Mg(2+). Asp712 contacts Mg(2+). Cys759 acts as the Proton donor in catalysis.

The protein belongs to the PEP-utilizing enzyme family. It depends on Mg(2+) as a cofactor.

The enzyme catalyses pyruvate + ATP + H2O = phosphoenolpyruvate + AMP + phosphate + 2 H(+). Its pathway is carbohydrate biosynthesis; gluconeogenesis. Functionally, catalyzes the phosphorylation of pyruvate to phosphoenolpyruvate. This chain is Probable phosphoenolpyruvate synthase (ppsA), found in Pyrococcus horikoshii (strain ATCC 700860 / DSM 12428 / JCM 9974 / NBRC 100139 / OT-3).